Reading from the N-terminus, the 126-residue chain is Protein ApaG (126 aa).

The ApaG domain occupies Lys2–His126.

The polypeptide is Protein ApaG (Shewanella loihica (strain ATCC BAA-1088 / PV-4)).